Consider the following 294-residue polypeptide: Fatty acyl-CoA reductase Rv0547c (294 aa).

NADP(+) is bound by residues Ser49, Ser50, Ile52, Arg72, Asp97, Leu98, Asn124, Tyr192, Lys196, Val225, and Thr227. Tyr192 functions as the Proton acceptor in the catalytic mechanism.

This sequence belongs to the short-chain dehydrogenases/reductases (SDR) family.

Its subcellular location is the host mitochondrion. The catalysed reaction is hexadecanal + NADP(+) + CoA = hexadecanoyl-CoA + NADPH + H(+). Its function is as follows. Oxidoreductase that promotes the persistence of M.tuberculosis in host macrophages by reprogramming the fatty acid metabolism in host mitochondria. When localized in the host mitochondria, it potentially acts on unknown lipid substrates and converts them into products that directly or indirectly alter the lipid profile of the mitochondria. This change in lipid profile results in increased mitochondrial membrane fluidity, enhanced endogenous fatty acid oxidation and increased mitochondrial spare respiratory capacity. All these events eventually favor M.tuberculosis persistence in the host macrophages. In vitro, can catalyze the NADPH-dependent reduction of palmitoyl-CoA (hexadecanoyl-CoA). The protein is Fatty acyl-CoA reductase Rv0547c of Mycobacterium tuberculosis (strain ATCC 25618 / H37Rv).